A 417-amino-acid chain; its full sequence is Adrenocortical dysplasia protein homolog (417 aa).

Positions 11 to 13 match the PWI motif; that stretch reads PWI. Position 25 is a phosphoserine (Ser-25). The interval 156-245 is interaction with POT1; it reads ESASSSAGLT…SSIDSSQKAQ (90 aa). Polar residues-rich tracts occupy residues 237 to 250 and 259 to 292; these read SIDS…NPAS and SGAS…TSPR. Positions 237-309 are disordered; the sequence is SIDSSQKAQE…PCSSTPSSPL (73 aa). Over residues 296–309 the composition is skewed to low complexity; the sequence is PSSTPCSSTPSSPL. Residues Ser-313 and Ser-317 each carry the phosphoserine modification. Residue Lys-348 forms a Glycyl lysine isopeptide (Lys-Gly) (interchain with G-Cter in SUMO2) linkage.

Component of the shelterin complex (telosome) composed of TERF1, TERF2, TINF2, TERF2IP ACD and POT1. Forms heterodimers with POT1. Identified in a complex with POT1 and single-stranded telomeric DNA. Interacts with STN1 and TINF2.

Its subcellular location is the nucleus. It is found in the chromosome. The protein localises to the telomere. Its function is as follows. Component of the shelterin complex (telosome) that is involved in the regulation of telomere length and protection. Shelterin associates with arrays of double-stranded TTAGGG repeats added by telomerase and protects chromosome ends. Without its protective activity, telomeres are no longer hidden from the DNA damage surveillance and chromosome ends are inappropriately processed by DNA repair pathways. Promotes binding of POT1 to single-stranded telomeric DNA. Modulates the inhibitory effects of POT1 on telomere elongation. The ACD-POT1 heterodimer enhances telomere elongation by recruiting telomerase to telomeres and increasing its processivity. May play a role in organogenesis. This is Adrenocortical dysplasia protein homolog from Rattus norvegicus (Rat).